The sequence spans 303 residues: NAD kinase (303 aa).

D71 (proton acceptor) is an active-site residue. NAD(+)-binding positions include 71–72 (DG), 145–146 (ND), R156, R173, D175, 186–191 (TGYSLS), and Q245.

Belongs to the NAD kinase family. Requires a divalent metal cation as cofactor.

It localises to the cytoplasm. The catalysed reaction is NAD(+) + ATP = ADP + NADP(+) + H(+). Involved in the regulation of the intracellular balance of NAD and NADP, and is a key enzyme in the biosynthesis of NADP. Catalyzes specifically the phosphorylation on 2'-hydroxyl of the adenosine moiety of NAD to yield NADP. The protein is NAD kinase of Magnetococcus marinus (strain ATCC BAA-1437 / JCM 17883 / MC-1).